The following is a 434-amino-acid chain: Pancreatic lipase-related protein 2 (434 aa).

Residues Cys4 and Cys10 are joined by a disulfide bond. The interval 76 to 88 is required for galactolipase activity; it reads IHGFTDSGENSWL. Cys92 and Cys103 are oxidised to a cystine. Ser154 (nucleophile) is an active-site residue. Asp178 functions as the Charge relay system in the catalytic mechanism. Ca(2+) contacts are provided by Glu189, Arg192, Asp194, and Asp197. The cysteines at positions 239 and 245 are disulfide-linked. The tract at residues 240 to 244 is required for galactolipase activity; that stretch reads KTGIS. His247 serves as the catalytic Charge relay system. 2 disulfide bridges follow: Cys269/Cys280 and Cys283/Cys288. N-linked (GlcNAc...) asparagine glycosylation occurs at Asn318. The 113-residue stretch at 322 to 434 folds into the PLAT domain; the sequence is WRYKVTVTLS…ENVEQTLSPC (113 aa). Cys418 and Cys434 form a disulfide bridge.

Belongs to the AB hydrolase superfamily. Lipase family. Pancreas.

Its subcellular location is the secreted. It localises to the zymogen granule membrane. It is found in the cell projection. The protein resides in the neuron projection. The catalysed reaction is a triacylglycerol + H2O = a diacylglycerol + a fatty acid + H(+). It carries out the reaction a 1,2-diacyl-3-O-(beta-D-galactosyl)-sn-glycerol + 2 H2O = 3-beta-D-galactosyl-sn-glycerol + 2 a fatty acid + 2 H(+). The enzyme catalyses 1,2,3-tri-(9Z-octadecenoyl)-glycerol + H2O = di-(9Z)-octadecenoylglycerol + (9Z)-octadecenoate + H(+). It catalyses the reaction di-(9Z)-octadecenoylglycerol + H2O = (9Z-octadecenoyl)-glycerol + (9Z)-octadecenoate + H(+). The catalysed reaction is (9Z-octadecenoyl)-glycerol + H2O = glycerol + (9Z)-octadecenoate + H(+). It carries out the reaction 1-(9Z-octadecenoyl)-glycerol + H2O = glycerol + (9Z)-octadecenoate + H(+). The enzyme catalyses 1,2,3-tripropanoylglycerol + H2O = dipropanoylglycerol + propanoate + H(+). It catalyses the reaction 1,2,3-tributanoylglycerol + H2O = dibutanoylglycerol + butanoate + H(+). The catalysed reaction is 1,2,3-trioctanoylglycerol + H2O = dioctanoylglycerol + octanoate + H(+). It carries out the reaction 1,2-didecanoylglycerol + H2O = decanoylglycerol + decanoate + H(+). The enzyme catalyses long chain 1,2-diacyl-3-O-beta-D-galactosyl-sn-glycerol + H2O = long chain acyl-3-O-beta-D-galactosyl-sn-glycerol + a fatty acid + H(+). It catalyses the reaction 1,2-dioctanoyl-3-O-beta-D-galactosyl-sn-glycerol + H2O = octanoyl-3-(beta-D-galactosyl)-sn-glycerol + octanoate + H(+). The catalysed reaction is 1,2-didodecanoyl-3-beta-D-galactosyl-sn-glycerol + H2O = dodecanoyl-3-beta-D-galactosyl-sn-glycerol + dodecanoate + H(+). It carries out the reaction 1-beta-D-galactosyl-2,3-didodecanoyl-sn-glycerol + H2O = 1-beta-D-galactosyl-dodecanoyl-sn-glycerol + dodecanoate + H(+). The enzyme catalyses a 1,2-diacyl-3-O-[alpha-D-galactosyl-(1-&gt;6)-beta-D-galactosyl]-sn-glycerol + H2O = acyl-3-O-[alpha-D-galactosyl-(1-&gt;6)-beta-D-galactosyl]-sn-glycerol + a fatty acid + H(+). It catalyses the reaction long chain 1,2-diacyl-3-O-[alpha-D-galactosyl-(1-&gt;6)-beta-D-galactosyl]-sn-glycerol + H2O = long chain acyl-3-O-[alpha-D-galactosyl-(1-&gt;6)-beta-D-galactosyl]-sn-glycerol + a fatty acid + H(+). The catalysed reaction is 1,2-dioctanoyl-3-O-[alpha-D-galactosyl-(1-&gt;6)-beta-D-galactosyl]-sn-glycerol + H2O = octanoyl-3-O-[alpha-D-galactosyl-(1-&gt;6)-beta-D-galactosyl]-sn-glycerol + octanoate + H(+). It carries out the reaction 1,2-didodecanoyl-3-O-[alpha-D-galactosyl-(1-&gt;6)-beta-D-galactosyl]-sn-glycerol + H2O = dodecanoyl-3-O-[alpha-D-galactosyl-(1-&gt;6)-beta-D-galactosyl]-sn-glycerol + dodecanoate + H(+). The enzyme catalyses a 1,2-diacyl-sn-glycero-3-phosphocholine + H2O = a monoacyl-sn-glycero-3-phosphocholine + a fatty acid + H(+). It functions in the pathway glycerolipid metabolism; triacylglycerol degradation. Its pathway is glycolipid metabolism. With respect to regulation, CLPS stimulates triacylglycerol lipase activity. Not inhibited by bile salts. Its function is as follows. Lipase that primarily hydrolyzes triglycerides and galactosylglycerides. In neonates, may play a major role in pancreatic digestion of dietary fats such as milk fat globules enriched in long-chain triglycerides. Hydrolyzes short-, medium- and long-chain fatty acyls in triglycerides without apparent positional specificity. Can completely deacylate triacylglycerols. When the liver matures and bile salt synthesis increases, likely functions mainly as a galactolipase and monoacylglycerol lipase. Hydrolyzes monogalactosyldiglycerols (MGDG) and digalactosyldiacylglycerols (DGDG) present in a plant-based diet, releasing long-chain polyunsaturated fatty acids. Hydrolyzes medium- and long-chain fatty acyls in galactolipids. May act together with LIPF to hydrolyze partially digested triglycerides. Hydrolyzes long-chain monoglycerides with high efficiency. In cytotoxic T cells, contributes to perforin-dependent cell lysis, but is unlikely to mediate direct cytotoxicity. Also has low phospholipase activity. In neurons, required for the localization of the phospholipid 1-oleoyl-2-palmitoyl-PC (OPPC) to neurite tips through acyl chain remodeling of membrane phospholipids. The resulting OPPC-rich lipid membrane domain recruits the t-SNARE protein STX4 by selectively interacting with the STX4 transmembrane domain and this promotes surface expression of the dopamine transporter SLC6A3/DAT at neurite tips by facilitating fusion of SLC6A3-containing transport vesicles with the plasma membrane. This Cavia porcellus (Guinea pig) protein is Pancreatic lipase-related protein 2.